A 312-amino-acid chain; its full sequence is Flavonol 3-sulfotransferase (312 aa).

59 to 64 is a 3'-phosphoadenylyl sulfate binding site; the sequence is KSGTTW. The Proton acceptor role is filled by histidine 119. Residues arginine 141, serine 149, tyrosine 207, and 277 to 279 each bind 3'-phosphoadenylyl sulfate; that span reads RKG.

The protein belongs to the sulfotransferase 1 family. Highest in shoot tips and lowest in mature leaves and roots.

It localises to the cytoplasm. Its function is as follows. Sulfotransferase that utilizes 3'-phospho-5'-adenylyl sulfate (PAPS) as sulfonate donor to catalyze the sulfate conjugation of quercetin, rhamnetin and isorhamnetin but not kaempferol. O-sulfation of position 3 of flavonol. May play a role in auxin transport. This chain is Flavonol 3-sulfotransferase, found in Flaveria bidentis (Coastal plain yellowtops).